A 428-amino-acid chain; its full sequence is Trigger factor (428 aa).

One can recognise a PPIase FKBP-type domain in the interval 163–248 (GNIAVIDFKG…VKEIKVKELP (86 aa)).

It belongs to the FKBP-type PPIase family. Tig subfamily.

The protein localises to the cytoplasm. It catalyses the reaction [protein]-peptidylproline (omega=180) = [protein]-peptidylproline (omega=0). Involved in protein export. Acts as a chaperone by maintaining the newly synthesized protein in an open conformation. Functions as a peptidyl-prolyl cis-trans isomerase. This chain is Trigger factor, found in Clostridium perfringens (strain ATCC 13124 / DSM 756 / JCM 1290 / NCIMB 6125 / NCTC 8237 / Type A).